The sequence spans 417 residues: Zinc-finger homeodomain protein 4 (417 aa).

Residues 1-12 (MVSILQLQTRTE) are compositionally biased toward polar residues. Disordered regions lie at residues 1 to 22 (MVSI…ASAA) and 31 to 50 (RQQQ…FQER). The span at 13–22 (ASPASSASAA) shows a compositional bias: low complexity. Positions 36–46 (QEGEEEEEEFE) are enriched in acidic residues. A ZF-HD dimerization-type; degenerate zinc finger spans residues 145-194 (YRECLKNHAAAIGGNATDGCGEFMPSGEEGSLEALKCSACGCHRNFHRKE). 2 disordered regions span residues 281-309 (DEMD…FRTK) and 361-417 (NLAK…LKLE). Residues 286–298 (SGGGGGVGRGGGS) are compositionally biased toward gly residues. Positions 303–366 (KKRFRTKFTA…NNKHNLAKKP (64 aa)) form a DNA-binding region, homeobox. The segment covering 368–417 (PSSPPPPPQIPPMSMPPSPPPPQIPPMSMPPSPPPMPMPMPPSPPQLKLE) has biased composition (pro residues).

As to quaternary structure, homo- and heterodimer with other ZFHD proteins.

It localises to the nucleus. Functionally, putative transcription factor. This Oryza sativa subsp. japonica (Rice) protein is Zinc-finger homeodomain protein 4 (ZHD4).